Consider the following 491-residue polypeptide: Ribonuclease Y (491 aa).

Residues 4-24 traverse the membrane as a helical segment; that stretch reads LIATVGVVAVAALVIAIFVVI. The 67-residue stretch at 181 to 247 folds into the KH domain; that stretch reads VVSVVHLPGD…RVALERLVDD (67 aa). In terms of domain architecture, HD spans 307–400; that stretch reads VLKHLVETAH…TQAADAISGG (94 aa).

This sequence belongs to the RNase Y family.

The protein localises to the cell membrane. Endoribonuclease that initiates mRNA decay. This Acidothermus cellulolyticus (strain ATCC 43068 / DSM 8971 / 11B) protein is Ribonuclease Y.